A 283-amino-acid chain; its full sequence is Bifunctional protein FolD (283 aa).

Residues 165-167 (GAS) and serine 190 each bind NADP(+).

The protein belongs to the tetrahydrofolate dehydrogenase/cyclohydrolase family. Homodimer.

It catalyses the reaction (6R)-5,10-methylene-5,6,7,8-tetrahydrofolate + NADP(+) = (6R)-5,10-methenyltetrahydrofolate + NADPH. The catalysed reaction is (6R)-5,10-methenyltetrahydrofolate + H2O = (6R)-10-formyltetrahydrofolate + H(+). It participates in one-carbon metabolism; tetrahydrofolate interconversion. Its function is as follows. Catalyzes the oxidation of 5,10-methylenetetrahydrofolate to 5,10-methenyltetrahydrofolate and then the hydrolysis of 5,10-methenyltetrahydrofolate to 10-formyltetrahydrofolate. This Cupriavidus pinatubonensis (strain JMP 134 / LMG 1197) (Cupriavidus necator (strain JMP 134)) protein is Bifunctional protein FolD.